A 237-amino-acid polypeptide reads, in one-letter code: Ribonuclease PH (237 aa).

Phosphate-binding positions include Arg-86 and 124–126 (GTR).

Belongs to the RNase PH family. As to quaternary structure, homohexameric ring arranged as a trimer of dimers.

The catalysed reaction is tRNA(n+1) + phosphate = tRNA(n) + a ribonucleoside 5'-diphosphate. Functionally, phosphorolytic 3'-5' exoribonuclease that plays an important role in tRNA 3'-end maturation. Removes nucleotide residues following the 3'-CCA terminus of tRNAs; can also add nucleotides to the ends of RNA molecules by using nucleoside diphosphates as substrates, but this may not be physiologically important. Probably plays a role in initiation of 16S rRNA degradation (leading to ribosome degradation) during starvation. The polypeptide is Ribonuclease PH (Shewanella sp. (strain ANA-3)).